We begin with the raw amino-acid sequence, 185 residues long: ATP synthase subunit b 1 (185 aa).

The chain crosses the membrane as a helical span at residues 4 to 24; that stretch reads TLAIALTLATTSPAFAAGGGW.

Belongs to the ATPase B chain family. As to quaternary structure, F-type ATPases have 2 components, F(1) - the catalytic core - and F(0) - the membrane proton channel. F(1) has five subunits: alpha(3), beta(3), gamma(1), delta(1), epsilon(1). F(0) has three main subunits: a(1), b(2) and c(10-14). The alpha and beta chains form an alternating ring which encloses part of the gamma chain. F(1) is attached to F(0) by a central stalk formed by the gamma and epsilon chains, while a peripheral stalk is formed by the delta and b chains.

It is found in the cell inner membrane. Functionally, f(1)F(0) ATP synthase produces ATP from ADP in the presence of a proton or sodium gradient. F-type ATPases consist of two structural domains, F(1) containing the extramembraneous catalytic core and F(0) containing the membrane proton channel, linked together by a central stalk and a peripheral stalk. During catalysis, ATP synthesis in the catalytic domain of F(1) is coupled via a rotary mechanism of the central stalk subunits to proton translocation. Its function is as follows. Component of the F(0) channel, it forms part of the peripheral stalk, linking F(1) to F(0). The chain is ATP synthase subunit b 1 from Ruegeria sp. (strain TM1040) (Silicibacter sp.).